A 589-amino-acid polypeptide reads, in one-letter code: uncharacterized protein (589 aa).

Disordered regions lie at residues 328 to 365 (LSST…EDGP), 379 to 459 (SLLG…DPSN), 525 to 555 (RSTS…GAVK), and 569 to 589 (VRGT…SRDM). A compositionally biased stretch (polar residues) spans 398–425 (VSLSSASTSARPTQRRSSLTPCSQTPQE). A compositionally biased stretch (basic and acidic residues) spans 426–445 (THQHAREALTTRMESQREAN). Positions 536 to 545 (QGDDDDEEDG) are enriched in acidic residues.

This is an uncharacterized protein from Mycosarcoma maydis (Corn smut fungus).